A 70-amino-acid chain; its full sequence is DNA-directed RNA polymerase subunit omega (70 aa).

It belongs to the RNA polymerase subunit omega family. In terms of assembly, the RNAP catalytic core consists of 2 alpha, 1 beta, 1 beta' and 1 omega subunit. When a sigma factor is associated with the core the holoenzyme is formed, which can initiate transcription.

The catalysed reaction is RNA(n) + a ribonucleoside 5'-triphosphate = RNA(n+1) + diphosphate. Its function is as follows. Promotes RNA polymerase assembly. Latches the N- and C-terminal regions of the beta' subunit thereby facilitating its interaction with the beta and alpha subunits. The sequence is that of DNA-directed RNA polymerase subunit omega from Staphylococcus haemolyticus (strain JCSC1435).